Consider the following 464-residue polypeptide: Cysteine--tRNA ligase (464 aa).

C32 contacts Zn(2+). Positions V34–H44 match the 'HIGH' region motif. The Zn(2+) site is built by C213, H238, and E242. The 'KMSKS' region signature appears at K270–S274. K273 contributes to the ATP binding site.

Belongs to the class-I aminoacyl-tRNA synthetase family. In terms of assembly, monomer. Requires Zn(2+) as cofactor.

The protein resides in the cytoplasm. It catalyses the reaction tRNA(Cys) + L-cysteine + ATP = L-cysteinyl-tRNA(Cys) + AMP + diphosphate. The chain is Cysteine--tRNA ligase from Francisella tularensis subsp. holarctica (strain LVS).